The sequence spans 255 residues: Superoxide dismutase [Fe] 2, chloroplastic (255 aa).

The transit peptide at 1-32 (MAAFASALRVLPSPPAAVPRRLRSREQRQGCR) directs the protein to the chloroplast. Positions 67, 119, 203, and 207 each coordinate Fe cation.

The protein belongs to the iron/manganese superoxide dismutase family. In terms of assembly, homodimer. Fe cation is required as a cofactor. In terms of tissue distribution, strongly expressed in the stems of the young seedlings, etiolated seedlings and embryogenic calli, but only minimally expressed in the leaves and the roots.

The protein localises to the plastid. It is found in the chloroplast. The enzyme catalyses 2 superoxide + 2 H(+) = H2O2 + O2. Functionally, destroys superoxide anion radicals which are normally produced within the cells and which are toxic to biological systems. In Oryza sativa subsp. japonica (Rice), this protein is Superoxide dismutase [Fe] 2, chloroplastic.